The chain runs to 419 residues: L-rhamnose isomerase (419 aa).

Residues histidine 262, aspartate 294, and aspartate 296 each coordinate Mn(2+).

This sequence belongs to the rhamnose isomerase family. As to quaternary structure, homotetramer. Mn(2+) serves as cofactor.

Its subcellular location is the cytoplasm. The catalysed reaction is L-rhamnopyranose = L-rhamnulose. The protein operates within carbohydrate degradation; L-rhamnose degradation; glycerone phosphate from L-rhamnose: step 1/3. Functionally, catalyzes the interconversion of L-rhamnose and L-rhamnulose. This chain is L-rhamnose isomerase, found in Salmonella paratyphi A (strain AKU_12601).